A 213-amino-acid polypeptide reads, in one-letter code: Octanoyltransferase (213 aa).

The region spanning 32–207 is the BPL/LPL catalytic domain; that stretch reads ENSHDEIWLV…NILALLNNPP (176 aa). Substrate contacts are provided by residues 71-78, 138-140, and 151-153; these read RGGQVTYH, SLG, and GLA. C169 functions as the Acyl-thioester intermediate in the catalytic mechanism.

It belongs to the LipB family.

It is found in the cytoplasm. The catalysed reaction is octanoyl-[ACP] + L-lysyl-[protein] = N(6)-octanoyl-L-lysyl-[protein] + holo-[ACP] + H(+). It functions in the pathway protein modification; protein lipoylation via endogenous pathway; protein N(6)-(lipoyl)lysine from octanoyl-[acyl-carrier-protein]: step 1/2. In terms of biological role, catalyzes the transfer of endogenously produced octanoic acid from octanoyl-acyl-carrier-protein onto the lipoyl domains of lipoate-dependent enzymes. Lipoyl-ACP can also act as a substrate although octanoyl-ACP is likely to be the physiological substrate. In Salmonella typhi, this protein is Octanoyltransferase.